The primary structure comprises 123 residues: UPF0102 protein Psyr_4114 (123 aa).

Belongs to the UPF0102 family.

In Pseudomonas syringae pv. syringae (strain B728a), this protein is UPF0102 protein Psyr_4114.